The sequence spans 88 residues: Small ribosomal subunit protein bS20 (88 aa).

Positions 1–27 (MANSKSAKKRALQSEKRRQHNASRRSM) are disordered.

This sequence belongs to the bacterial ribosomal protein bS20 family.

Its function is as follows. Binds directly to 16S ribosomal RNA. In Shewanella frigidimarina (strain NCIMB 400), this protein is Small ribosomal subunit protein bS20.